Reading from the N-terminus, the 1773-residue chain is Disco-interacting protein 2 (1773 aa).

One can recognise a DMAP1-binding domain in the interval 3 to 110; sequence HTASLPGYVR…QRHSKKIDFH (108 aa). A phosphotyrosine mark is found at Tyr-60 and Tyr-61. 2 disordered regions span residues 112–185 and 198–319; these read QAAM…YHSE and LKGR…PLSS. Polar residues-rich tracts occupy residues 113–125 and 146–165; these read AAMS…QSGN and YQNT…NNSQ. The span at 166 to 175 shows a compositional bias: basic residues; that stretch reads HRQRRTQRKV. A compositionally biased stretch (basic and acidic residues) spans 176 to 185; the sequence is THNEKRYHSE. The span at 224-236 shows a compositional bias: acidic residues; the sequence is DELDSSTDDESIP. The span at 241–253 shows a compositional bias: basic and acidic residues; the sequence is SPDKEYNYPRDHI. Residues 272–297 are compositionally biased toward polar residues; the sequence is SMGSQQHARTDVKQNQITNQKYTAPN.

Belongs to the DIP2 family. Interacts with Disco. As to expression, expressed in the developing nervous system. Ubiquitously expressed in the developing brain. Within the mushroom body, a higher level is detected in the core of lobes and peduncle in the late third instar larva. Detected in whole mushroom body neuron structures at 48 hours after puparium formation and during later stages.

It localises to the cell membrane. In terms of biological role, required for precise axonal bifurcation in mushroom body neurons by suppressing ectopic bifurcation and regulating the guidance of sister axons. May function by regulating expression of tdp1. Acts downstream of the serine/threonine-protein kinase Bsk to modulate the direction of axon projection. May play a role in fatty acid metabolism. The chain is Disco-interacting protein 2 from Drosophila melanogaster (Fruit fly).